The following is an 87-amino-acid chain: Small ribosomal subunit protein uS17 (87 aa).

The protein belongs to the universal ribosomal protein uS17 family. In terms of assembly, part of the 30S ribosomal subunit.

Its function is as follows. One of the primary rRNA binding proteins, it binds specifically to the 5'-end of 16S ribosomal RNA. This is Small ribosomal subunit protein uS17 from Pelotomaculum thermopropionicum (strain DSM 13744 / JCM 10971 / SI).